We begin with the raw amino-acid sequence, 87 residues long: UPF0250 protein plu1293 (87 aa).

It belongs to the UPF0250 family.

This chain is UPF0250 protein plu1293, found in Photorhabdus laumondii subsp. laumondii (strain DSM 15139 / CIP 105565 / TT01) (Photorhabdus luminescens subsp. laumondii).